The chain runs to 442 residues: Proline--tRNA ligase (442 aa).

It belongs to the class-II aminoacyl-tRNA synthetase family. ProS type 2 subfamily. As to quaternary structure, homodimer.

The protein localises to the cytoplasm. It catalyses the reaction tRNA(Pro) + L-proline + ATP = L-prolyl-tRNA(Pro) + AMP + diphosphate. In terms of biological role, catalyzes the attachment of proline to tRNA(Pro) in a two-step reaction: proline is first activated by ATP to form Pro-AMP and then transferred to the acceptor end of tRNA(Pro). In Mesorhizobium japonicum (strain LMG 29417 / CECT 9101 / MAFF 303099) (Mesorhizobium loti (strain MAFF 303099)), this protein is Proline--tRNA ligase.